Consider the following 129-residue polypeptide: UPF0325 protein ECA1027 (129 aa).

It belongs to the UPF0325 family.

The sequence is that of UPF0325 protein ECA1027 from Pectobacterium atrosepticum (strain SCRI 1043 / ATCC BAA-672) (Erwinia carotovora subsp. atroseptica).